A 334-amino-acid chain; its full sequence is N,N'-diacetyllegionaminic acid synthase (334 aa).

Positions 282 to 334 constitute an AFP-like domain; sequence SLVAKKDIKKGEIFSEGNLTTKRPANGISAMRYEEFLGKIATKNYKEDELIRE.

The enzyme catalyses 2,4-diacetamido-2,4,6-trideoxy-alpha-D-mannopyranose + phosphoenolpyruvate + H2O = N,N-diacetyllegionaminate + phosphate. Its function is as follows. Involved in biosynthesis of legionaminic acid (5,7-diamino-3,5,7,9-tetradeoxy-D-glycero-D-galacto-non-2-ulosonic acid)(Leg), a sialic acid-like derivative that is incorporated into flagellin via O-linkage to Ser/Thr. Catalyzes the condensation of 2,4-diacetamido-2,4,6-trideoxymannose with phosphoenolpyruvate (PEP) to give N,N'-diacetyllegionaminic acid. The sequence is that of N,N'-diacetyllegionaminic acid synthase (legI) from Campylobacter jejuni subsp. jejuni serotype O:2 (strain ATCC 700819 / NCTC 11168).